A 298-amino-acid polypeptide reads, in one-letter code: Acetylglutamate kinase (298 aa).

Substrate is bound by residues 64–65 (GG), R86, and N195.

Belongs to the acetylglutamate kinase family. ArgB subfamily.

The protein resides in the cytoplasm. The catalysed reaction is N-acetyl-L-glutamate + ATP = N-acetyl-L-glutamyl 5-phosphate + ADP. The protein operates within amino-acid biosynthesis; L-arginine biosynthesis; N(2)-acetyl-L-ornithine from L-glutamate: step 2/4. Functionally, catalyzes the ATP-dependent phosphorylation of N-acetyl-L-glutamate. The chain is Acetylglutamate kinase from Aquifex aeolicus (strain VF5).